A 311-amino-acid chain; its full sequence is Elongation factor Ts (311 aa).

Residues 81–84 (TDFV) are involved in Mg(2+) ion dislocation from EF-Tu.

The protein belongs to the EF-Ts family.

It localises to the cytoplasm. In terms of biological role, associates with the EF-Tu.GDP complex and induces the exchange of GDP to GTP. It remains bound to the aminoacyl-tRNA.EF-Tu.GTP complex up to the GTP hydrolysis stage on the ribosome. This Trichlorobacter lovleyi (strain ATCC BAA-1151 / DSM 17278 / SZ) (Geobacter lovleyi) protein is Elongation factor Ts.